The following is a 201-amino-acid chain: Putative manganese efflux pump MntP (201 aa).

The next 6 helical transmembrane spans lie at 3-23 (LVSI…VSIT), 39-59 (IGLF…SIGI), 65-85 (IAAL…GKMI), 116-136 (LTLL…SFAF), 141-161 (IINT…IGVM), and 176-196 (ILGG…HTNI).

It belongs to the MntP (TC 9.B.29) family.

The protein localises to the cell membrane. In terms of biological role, probably functions as a manganese efflux pump. This Clostridium botulinum (strain Loch Maree / Type A3) protein is Putative manganese efflux pump MntP.